The chain runs to 275 residues: Large ribosomal subunit protein uL2 (275 aa).

Residues 223 to 275 (VVMNPVDHPHGGGEGKSSGGRHPVSPWGMPTKGYKTRKNKGTDQYIVRRRNKK) are disordered.

This sequence belongs to the universal ribosomal protein uL2 family. In terms of assembly, part of the 50S ribosomal subunit. Forms a bridge to the 30S subunit in the 70S ribosome.

Its function is as follows. One of the primary rRNA binding proteins. Required for association of the 30S and 50S subunits to form the 70S ribosome, for tRNA binding and peptide bond formation. It has been suggested to have peptidyltransferase activity; this is somewhat controversial. Makes several contacts with the 16S rRNA in the 70S ribosome. The protein is Large ribosomal subunit protein uL2 of Psychromonas ingrahamii (strain DSM 17664 / CCUG 51855 / 37).